A 927-amino-acid chain; its full sequence is DIS3-like exonuclease 2 (927 aa).

Basic residues predominate over residues 1–12; it reads MDLKPNIRRKEK. The disordered stretch occupies residues 1–168; sequence MDLKPNIRRK…DTNNATEMVS (168 aa). Residues 13–31 show a composition bias toward basic and acidic residues; sequence RNLLKGEAALEKKGSIDRK. Residues 97 to 106 show a composition bias toward basic residues; the sequence is VKPKAKKKNS. Residues 107-152 show a composition bias toward basic and acidic residues; it reads KEKISKSSKQDEHKTDVHKESVSKLSKNLESRNNRDENSAKREKNN. Polar residues predominate over residues 153-168; that stretch reads SHQVEADTNNATEMVS. Mg(2+) contacts are provided by D453 and D462.

The protein belongs to the RNR ribonuclease family. DIS3L2 subfamily. The cofactor is Mg(2+). Requires Mn(2+) as cofactor.

The protein localises to the cytoplasm. It localises to the P-body. In terms of biological role, 3'-5'-exoribonuclease that specifically recognizes RNAs polyuridylated at their 3' end and mediates their degradation. Component of an exosome-independent RNA degradation pathway that mediates degradation of cytoplasmic mRNAs that have been deadenylated and subsequently uridylated at their 3'. This is DIS3-like exonuclease 2 (dis32) from Schizosaccharomyces pombe (strain 972 / ATCC 24843) (Fission yeast).